The following is a 240-amino-acid chain: Phosphatidylserine decarboxylase proenzyme (240 aa).

Serine 209 acts as the Schiff-base intermediate with substrate; via pyruvic acid in catalysis. Serine 209 is modified (pyruvic acid (Ser); by autocatalysis).

This sequence belongs to the phosphatidylserine decarboxylase family. PSD-A subfamily. As to quaternary structure, heterodimer of a large membrane-associated beta subunit and a small pyruvoyl-containing alpha subunit. It depends on pyruvate as a cofactor. In terms of processing, is synthesized initially as an inactive proenzyme. Formation of the active enzyme involves a self-maturation process in which the active site pyruvoyl group is generated from an internal serine residue via an autocatalytic post-translational modification. Two non-identical subunits are generated from the proenzyme in this reaction, and the pyruvate is formed at the N-terminus of the alpha chain, which is derived from the carboxyl end of the proenzyme. The post-translation cleavage follows an unusual pathway, termed non-hydrolytic serinolysis, in which the side chain hydroxyl group of the serine supplies its oxygen atom to form the C-terminus of the beta chain, while the remainder of the serine residue undergoes an oxidative deamination to produce ammonia and the pyruvoyl prosthetic group on the alpha chain.

The protein localises to the cell membrane. It carries out the reaction a 1,2-diacyl-sn-glycero-3-phospho-L-serine + H(+) = a 1,2-diacyl-sn-glycero-3-phosphoethanolamine + CO2. Its pathway is phospholipid metabolism; phosphatidylethanolamine biosynthesis; phosphatidylethanolamine from CDP-diacylglycerol: step 2/2. In terms of biological role, catalyzes the formation of phosphatidylethanolamine (PtdEtn) from phosphatidylserine (PtdSer). In Mycobacterium marinum (strain ATCC BAA-535 / M), this protein is Phosphatidylserine decarboxylase proenzyme.